We begin with the raw amino-acid sequence, 460 residues long: UDP-N-acetylmuramate--L-alanine ligase (460 aa).

Position 119–125 (119–125 (GSHGKTT)) interacts with ATP.

The protein belongs to the MurCDEF family.

It is found in the cytoplasm. It catalyses the reaction UDP-N-acetyl-alpha-D-muramate + L-alanine + ATP = UDP-N-acetyl-alpha-D-muramoyl-L-alanine + ADP + phosphate + H(+). It participates in cell wall biogenesis; peptidoglycan biosynthesis. Its function is as follows. Cell wall formation. This is UDP-N-acetylmuramate--L-alanine ligase from Alkaliphilus metalliredigens (strain QYMF).